A 205-amino-acid chain; its full sequence is Ribosomal RNA large subunit methyltransferase E (205 aa).

Residues G60, W62, D80, D96, and D121 each contribute to the S-adenosyl-L-methionine site. Catalysis depends on K161, which acts as the Proton acceptor.

Belongs to the class I-like SAM-binding methyltransferase superfamily. RNA methyltransferase RlmE family.

Its subcellular location is the cytoplasm. It carries out the reaction uridine(2552) in 23S rRNA + S-adenosyl-L-methionine = 2'-O-methyluridine(2552) in 23S rRNA + S-adenosyl-L-homocysteine + H(+). Specifically methylates the uridine in position 2552 of 23S rRNA at the 2'-O position of the ribose in the fully assembled 50S ribosomal subunit. The protein is Ribosomal RNA large subunit methyltransferase E of Azoarcus sp. (strain BH72).